The chain runs to 1194 residues: ATP-dependent RNA helicase DHX30 (1194 aa).

A compositionally biased stretch (basic and acidic residues) spans 1 to 10 (MFTLDSFRKD). The tract at residues 1 to 27 (MFTLDSFRKDRTQHRQRQCKLPPPRLP) is disordered. Ser6 carries the post-translational modification Phosphoserine. Residues 53–121 (PKNLLNSVIG…QAAAAACQLF (69 aa)) enclose the DRBM domain. Residues 153–200 (WWRPEPTMPPTSWRQLNPENIRPAGTGGLSRSLGREEEEDEEEELEEG) form a disordered region. Over residues 188 to 200 (EEEEDEEEELEEG) the composition is skewed to acidic residues. Residues Ser226 and Ser380 each carry the phosphoserine modification. Residues 444–612 (LSAIEQHPVV…FGGCPVIKVP (169 aa)) form the Helicase ATP-binding domain. 457–464 (GDTGCGKT) contributes to the ATP binding site. Residues 559-562 (DEVH) carry the DEAH box motif. The Helicase C-terminal domain occupies 654–827 (LVTDLVLHID…NLVLQAKIHM (174 aa)).

The protein belongs to the DEAD box helicase family. DEAH subfamily. Identified in a complex with TFAM and SSBP1. Interacts (via N-terminus) with ZC3HAV1 (via N-terminal domain) in an RNA-independent manner. Found in a complex with GRSF1, DDX28, FASTKD2 and FASTKD5.

Its subcellular location is the cytoplasm. It localises to the mitochondrion. It is found in the mitochondrion matrix. The protein localises to the mitochondrion nucleoid. The catalysed reaction is ATP + H2O = ADP + phosphate + H(+). RNA-dependent helicase. Plays an important role in the assembly of the mitochondrial large ribosomal subunit. Associates with mitochondrial DNA. Required for optimal function of the zinc-finger antiviral protein ZC3HAV1. Involved in nervous system development and differentiation through its involvement in the up-regulation of a number of genes which are required for neurogenesis, including GSC, NCAM1, neurogenin, and NEUROD. The sequence is that of ATP-dependent RNA helicase DHX30 (Dhx30) from Rattus norvegicus (Rat).